The chain runs to 212 residues: Ribonuclease HII (212 aa).

An RNase H type-2 domain is found at 4–206 (EVQCGIDEAG…YKKIKEDVES (203 aa)). Asp-10, Glu-11, and Asp-103 together coordinate a divalent metal cation.

The protein belongs to the RNase HII family. Requires Mn(2+) as cofactor. Mg(2+) is required as a cofactor.

It localises to the cytoplasm. The catalysed reaction is Endonucleolytic cleavage to 5'-phosphomonoester.. Endonuclease that specifically degrades the RNA of RNA-DNA hybrids. The protein is Ribonuclease HII of Thermoplasma volcanium (strain ATCC 51530 / DSM 4299 / JCM 9571 / NBRC 15438 / GSS1).